The following is a 132-amino-acid chain: Ubiquinol-cytochrome c reductase complex assembly factor 4 (132 aa).

An N-terminal signal peptide occupies residues 1–15; the sequence is MNRVLCAPAAGAVRA. Topologically, residues 16–78 are mitochondrial matrix; the sequence is LRLIGWASRS…GKGHQRPWWK (63 aa). A disordered region spans residues 29 to 72; the sequence is LPGSRDRAHPAAEEEDDPDRPIEFSSSKANPHRWSVGHTMGKGH. Residues 79-95 form a helical membrane-spanning segment; it reads VLPLSCFLVALIIWCYL. At 96–132 the chain is on the mitochondrial intermembrane side; the sequence is REESEADQWLRQVWGEVPEPSDRSEEPETPAAYRART. The disordered stretch occupies residues 110 to 132; it reads GEVPEPSDRSEEPETPAAYRART.

The protein belongs to the UQCC4 family. Forms a complex, named COMB/coordinator of mitochondrial CYTB biogenesis, composed of UQCC1, UQCC2, UQCC4, UQCC5 and UQCC6; stabilizes nascent cytochrome b/MT-CYB and promotes its membrane insertion. Forms a complex, named COMA, composed of UQCC1, UQCC2 and UQCC4; activates MT-CYB translation. Forms a complex, named COMC, composed of UQCC1, UQCC2; UQCC3 and UQCC4; mediates MT-CYB hemylation and association with the first nuclear-encoded complex III subunit UQCRQ. Complexes COMA and COMB are bound to the mitochondrion inner membrane by UQCC4.

The protein localises to the mitochondrion inner membrane. Its function is as follows. Required for the assembly and stability of the mitochondrial ubiquinol-cytochrome c reductase complex (complex III (CIII) or cytochrome b-c1 complex), a multisubunit transmembrane complex that is part of the mitochondrial electron transport chain (ETC) which drives oxidative phosphorylation. The sequence is that of Ubiquinol-cytochrome c reductase complex assembly factor 4 from Homo sapiens (Human).